A 70-amino-acid chain; its full sequence is Small ribosomal subunit protein bS21 (70 aa).

Belongs to the bacterial ribosomal protein bS21 family.

The chain is Small ribosomal subunit protein bS21 from Sulfurimonas denitrificans (strain ATCC 33889 / DSM 1251) (Thiomicrospira denitrificans (strain ATCC 33889 / DSM 1251)).